The following is a 194-amino-acid chain: Der GTPase-activating protein YihI (194 aa).

Residues 1 to 87 (MSRQKKSRNI…RDPRLGSRKK (87 aa)) are disordered. The span at 37 to 48 (TRYELDAKARED) shows a compositional bias: basic and acidic residues.

The protein belongs to the YihI family. Interacts with Der.

A GTPase-activating protein (GAP) that modifies Der/EngA GTPase function. May play a role in ribosome biogenesis. The chain is Der GTPase-activating protein YihI from Mannheimia succiniciproducens (strain KCTC 0769BP / MBEL55E).